The sequence spans 356 residues: 1-deoxy-D-xylulose 5-phosphate reductoisomerase (356 aa).

NADPH contacts are provided by threonine 7, glycine 8, serine 9, isoleucine 10, glycine 31, asparagine 33, and asparagine 111. Lysine 112 contacts 1-deoxy-D-xylulose 5-phosphate. Glutamate 113 is a binding site for NADPH. Mn(2+) is bound at residue aspartate 131. The 1-deoxy-D-xylulose 5-phosphate site is built by serine 132, glutamate 133, serine 155, and histidine 178. Mn(2+) is bound at residue glutamate 133. Glycine 184 is an NADPH binding site. 1-deoxy-D-xylulose 5-phosphate is bound by residues serine 191, asparagine 196, lysine 197, and glutamate 200. Mn(2+) is bound at residue glutamate 200.

It belongs to the DXR family. It depends on Mg(2+) as a cofactor. Mn(2+) is required as a cofactor.

The enzyme catalyses 2-C-methyl-D-erythritol 4-phosphate + NADP(+) = 1-deoxy-D-xylulose 5-phosphate + NADPH + H(+). The protein operates within isoprenoid biosynthesis; isopentenyl diphosphate biosynthesis via DXP pathway; isopentenyl diphosphate from 1-deoxy-D-xylulose 5-phosphate: step 1/6. Catalyzes the NADPH-dependent rearrangement and reduction of 1-deoxy-D-xylulose-5-phosphate (DXP) to 2-C-methyl-D-erythritol 4-phosphate (MEP). The polypeptide is 1-deoxy-D-xylulose 5-phosphate reductoisomerase (Campylobacter jejuni subsp. doylei (strain ATCC BAA-1458 / RM4099 / 269.97)).